The primary structure comprises 175 residues: Acetyl-CoA decarbonylase/synthase complex subunit epsilon 2 (175 aa).

It belongs to the CdhB family. In terms of assembly, heterotetramer of two alpha and two epsilon subunits. The ACDS complex is made up of alpha, epsilon, beta, gamma and delta subunits with a probable stoichiometry of (alpha(2)epsilon(2))(4)-beta(8)-(gamma(1)delta(1))(8).

In terms of biological role, part of a complex that catalyzes the reversible cleavage of acetyl-CoA, allowing autotrophic growth from CO(2). The alpha-epsilon subcomponent functions as a carbon monoxide dehydrogenase. The precise role of the epsilon subunit is unclear; it may have a stabilizing role within the alpha(2)epsilon(2) component and/or be involved in electron transfer to FAD during a potential FAD-mediated CO oxidation. This Archaeoglobus fulgidus (strain ATCC 49558 / DSM 4304 / JCM 9628 / NBRC 100126 / VC-16) protein is Acetyl-CoA decarbonylase/synthase complex subunit epsilon 2 (cdhB2).